Consider the following 579-residue polypeptide: Aspartate--tRNA(Asp/Asn) ligase (579 aa).

An L-aspartate-binding site is contributed by E171. The tract at residues 195–198 is aspartate; that stretch reads QLFK. R217 contributes to the L-aspartate binding site. ATP is bound by residues 217–219 and Q226; that span reads RDE. H444 lines the L-aspartate pocket. E475 is an ATP binding site. R482 contributes to the L-aspartate binding site. 527-530 is an ATP binding site; that stretch reads GLDR.

Belongs to the class-II aminoacyl-tRNA synthetase family. Type 1 subfamily. In terms of assembly, homodimer.

The protein resides in the cytoplasm. The catalysed reaction is tRNA(Asx) + L-aspartate + ATP = L-aspartyl-tRNA(Asx) + AMP + diphosphate. Aspartyl-tRNA synthetase with relaxed tRNA specificity since it is able to aspartylate not only its cognate tRNA(Asp) but also tRNA(Asn). Reaction proceeds in two steps: L-aspartate is first activated by ATP to form Asp-AMP and then transferred to the acceptor end of tRNA(Asp/Asn). This chain is Aspartate--tRNA(Asp/Asn) ligase, found in Thermotoga maritima (strain ATCC 43589 / DSM 3109 / JCM 10099 / NBRC 100826 / MSB8).